A 1228-amino-acid polypeptide reads, in one-letter code: DNA-directed RNA polymerase subunit beta (1228 aa).

This sequence belongs to the RNA polymerase beta chain family. The RNAP catalytic core consists of 2 alpha, 1 beta, 1 beta' and 1 omega subunit. When a sigma factor is associated with the core the holoenzyme is formed, which can initiate transcription.

The enzyme catalyses RNA(n) + a ribonucleoside 5'-triphosphate = RNA(n+1) + diphosphate. Its function is as follows. DNA-dependent RNA polymerase catalyzes the transcription of DNA into RNA using the four ribonucleoside triphosphates as substrates. In Leptospira biflexa, this protein is DNA-directed RNA polymerase subunit beta.